The primary structure comprises 237 residues: Uridylate kinase (237 aa).

9–12 (KFSG) is a binding site for ATP. The interval 17-22 (GEAGYG) is involved in allosteric activation by GTP. Gly-51 provides a ligand contact to UMP. The ATP site is built by Gly-52 and Arg-56. Residues Asp-72 and 133–140 (TGNPFFTT) contribute to the UMP site. ATP contacts are provided by Thr-160, Tyr-166, and Asp-169.

This sequence belongs to the UMP kinase family. As to quaternary structure, homohexamer.

It localises to the cytoplasm. It carries out the reaction UMP + ATP = UDP + ADP. Its pathway is pyrimidine metabolism; CTP biosynthesis via de novo pathway; UDP from UMP (UMPK route): step 1/1. Its activity is regulated as follows. Allosterically activated by GTP. Inhibited by UTP. Its function is as follows. Catalyzes the reversible phosphorylation of UMP to UDP. The polypeptide is Uridylate kinase (Sulfurimonas denitrificans (strain ATCC 33889 / DSM 1251) (Thiomicrospira denitrificans (strain ATCC 33889 / DSM 1251))).